Here is a 267-residue protein sequence, read N- to C-terminus: Hydroxyethylthiazole kinase 2 (267 aa).

A substrate-binding site is contributed by Met-41. Lys-116 and Thr-166 together coordinate ATP. Gly-193 provides a ligand contact to substrate.

This sequence belongs to the Thz kinase family. Mg(2+) is required as a cofactor.

The catalysed reaction is 5-(2-hydroxyethyl)-4-methylthiazole + ATP = 4-methyl-5-(2-phosphooxyethyl)-thiazole + ADP + H(+). The protein operates within cofactor biosynthesis; thiamine diphosphate biosynthesis; 4-methyl-5-(2-phosphoethyl)-thiazole from 5-(2-hydroxyethyl)-4-methylthiazole: step 1/1. Its function is as follows. Catalyzes the phosphorylation of the hydroxyl group of 4-methyl-5-beta-hydroxyethylthiazole (THZ). The polypeptide is Hydroxyethylthiazole kinase 2 (Streptococcus pneumoniae (strain JJA)).